The chain runs to 196 residues: Agamous-like MADS-box protein AGL27 (196 aa).

The MADS-box domain occupies 1 to 61; it reads MGRRKIEIKR…GKLYDSSSGD (61 aa). A K-box domain is found at 80-170; the sequence is ALDLEEKIQN…ASQMGKNTLL (91 aa). A disordered region spans residues 175 to 196; it reads ERGMFPGSSSGNKIPETLPLLN.

As to quaternary structure, interacts with AGL39, AGL97 and AGL74. Expressed in most plant tissues, embryo, seedlings, roots, leaves, stems, inflorescence, pollen, siliques and flowers.

The protein resides in the nucleus. Functionally, probable transcription factor involved in the negative regulation of flowering time in both long and short days, probably through the photoperiodic and vernalization pathways. Prevents premature flowering. This Arabidopsis thaliana (Mouse-ear cress) protein is Agamous-like MADS-box protein AGL27 (AGL27).